A 199-amino-acid chain; its full sequence is Casparian strip membrane protein 2 (199 aa).

Topologically, residues 1–37 (MMRGSTEIDMPESSSVSKGTAPLIAAPMKEKGGYKKG) are cytoplasmic. Residues 38–58 (IAIFDFILRLAAIATALAAAA) form a helical membrane-spanning segment. Residues 59–87 (SMGTSDETLPFFTQFFQFQASYDDLPTFQ) are Extracellular-facing. Residues 88 to 108 (FFVIAMAIVAGYLVLSLPFSI) traverse the membrane as a helical segment. The Cytoplasmic portion of the chain corresponds to 109-120 (VAIVRPHAAGPR). Residues 121 to 141 (LLLIILDTVALTLNTAAGAAA) traverse the membrane as a helical segment. The Extracellular segment spans residues 142–173 (AAIVYLAHNGNSSTNWLAICQQFGDFCQKNSG). The N-linked (GlcNAc...) asparagine glycan is linked to asparagine 152. The chain crosses the membrane as a helical span at residues 174–194 (AVVASFITVVIFVFLLVLSAF). Topologically, residues 195-199 (ALRRH) are cytoplasmic.

Belongs to the Casparian strip membrane proteins (CASP) family. Homodimer and heterodimers.

It localises to the cell membrane. Its function is as follows. Regulates membrane-cell wall junctions and localized cell wall deposition. Required for establishment of the Casparian strip membrane domain (CSD) and the subsequent formation of Casparian strips, a cell wall modification of the root endodermis that determines an apoplastic barrier between the intraorganismal apoplasm and the extraorganismal apoplasm and prevents lateral diffusion. The protein is Casparian strip membrane protein 2 of Populus trichocarpa (Western balsam poplar).